The chain runs to 268 residues: Indole-3-glycerol phosphate synthase (268 aa).

The protein belongs to the TrpC family.

It carries out the reaction 1-(2-carboxyphenylamino)-1-deoxy-D-ribulose 5-phosphate + H(+) = (1S,2R)-1-C-(indol-3-yl)glycerol 3-phosphate + CO2 + H2O. It participates in amino-acid biosynthesis; L-tryptophan biosynthesis; L-tryptophan from chorismate: step 4/5. This is Indole-3-glycerol phosphate synthase from Lachnospira eligens (strain ATCC 27750 / DSM 3376 / VPI C15-48 / C15-B4) (Eubacterium eligens).